A 327-amino-acid chain; its full sequence is Ribose-phosphate pyrophosphokinase (327 aa).

Residues 40 to 42 (DGE) and 99 to 100 (RQ) each bind ATP. Histidine 134 and aspartate 173 together coordinate Mg(2+). Residue lysine 196 is part of the active site. Residues arginine 198, aspartate 222, and 226-230 (DTANT) contribute to the D-ribose 5-phosphate site.

It belongs to the ribose-phosphate pyrophosphokinase family. Class I subfamily. As to quaternary structure, homohexamer. Mg(2+) is required as a cofactor.

It is found in the cytoplasm. It catalyses the reaction D-ribose 5-phosphate + ATP = 5-phospho-alpha-D-ribose 1-diphosphate + AMP + H(+). It participates in metabolic intermediate biosynthesis; 5-phospho-alpha-D-ribose 1-diphosphate biosynthesis; 5-phospho-alpha-D-ribose 1-diphosphate from D-ribose 5-phosphate (route I): step 1/1. Involved in the biosynthesis of the central metabolite phospho-alpha-D-ribosyl-1-pyrophosphate (PRPP) via the transfer of pyrophosphoryl group from ATP to 1-hydroxyl of ribose-5-phosphate (Rib-5-P). The polypeptide is Ribose-phosphate pyrophosphokinase (Chromobacterium violaceum (strain ATCC 12472 / DSM 30191 / JCM 1249 / CCUG 213 / NBRC 12614 / NCIMB 9131 / NCTC 9757 / MK)).